Consider the following 287-residue polypeptide: Troponin T, cardiac muscle (287 aa).

Acidic residues-rich tracts occupy residues 1–31 (MSDV…EEAG) and 44–59 (EDGE…DGPV). Disordered stretches follow at residues 1–85 (MSDV…GERV) and 124–208 (KDRI…EKKK). N-acetylserine is present on S2. Position 2 is a phosphoserine; by CK2 (S2). Positions 66–79 (APGPFMPNLVPPKI) are enriched in pro residues. Basic and acidic residues-rich tracts occupy residues 124 to 173 (KDRI…DEAR) and 192 to 208 (QAER…EKKK). S197 is subject to Phosphoserine; by PKC/PRKCA. The residue at position 202 (T202) is a Phosphothreonine; by PKC/PRKCA and RAF1. Position 283 is a phosphothreonine; by PKC/PRKCA (T283).

This sequence belongs to the troponin T family. In terms of processing, phosphorylation at Thr-202 by PRKCA induces significant reduction in myofilament calcium sensitivity and actomyosin ATPase activity.

Functionally, troponin T is the tropomyosin-binding subunit of troponin, the thin filament regulatory complex which confers calcium-sensitivity to striated muscle actomyosin ATPase activity. The protein is Troponin T, cardiac muscle (TNNT2) of Ovis aries (Sheep).